A 187-amino-acid polypeptide reads, in one-letter code: UPF0340 protein SPJ_0612 (187 aa).

Belongs to the UPF0340 family.

In Streptococcus pneumoniae (strain JJA), this protein is UPF0340 protein SPJ_0612.